The following is a 133-amino-acid chain: Small ribosomal subunit protein uS8 (133 aa).

Belongs to the universal ribosomal protein uS8 family. Part of the 30S ribosomal subunit. Contacts proteins S5 and S12.

In terms of biological role, one of the primary rRNA binding proteins, it binds directly to 16S rRNA central domain where it helps coordinate assembly of the platform of the 30S subunit. The polypeptide is Small ribosomal subunit protein uS8 (Trichodesmium erythraeum (strain IMS101)).